The primary structure comprises 254 residues: Ribonuclease 3 (254 aa).

The RNase III domain maps to 24–154; it reads LRRLQETLGV…VIGALFLDSG (131 aa). Glu67 is a binding site for Mg(2+). Asp71 is a catalytic residue. Positions 140 and 143 each coordinate Mg(2+). Glu143 is an active-site residue. The DRBM domain occupies 181-250; it reads DYKSTLQVLA…ARLAWEQLSG (70 aa).

Belongs to the ribonuclease III family. Homodimer. Mg(2+) serves as cofactor.

It localises to the cytoplasm. It carries out the reaction Endonucleolytic cleavage to 5'-phosphomonoester.. In terms of biological role, digests double-stranded RNA. Involved in the processing of primary rRNA transcript to yield the immediate precursors to the large and small rRNAs (23S and 16S). Processes some mRNAs, and tRNAs when they are encoded in the rRNA operon. Processes pre-crRNA and tracrRNA of type II CRISPR loci if present in the organism. In Treponema pallidum (strain Nichols), this protein is Ribonuclease 3.